The sequence spans 120 residues: Eukaryotic translation initiation factor 4E-binding protein 2 (120 aa).

A phosphothreonine; by MTOR mark is found at Thr-37 and Thr-46. The YXXXXLphi motif signature appears at 54–60 (YDRKFLL). Position 65 is a phosphoserine; by MTOR (Ser-65). A Phosphothreonine; by MTOR modification is found at Thr-70. Ser-83 is modified (phosphoserine). A deamidated asparagine mark is found at Asn-99 and Asn-102. The TOS motif signature appears at 116–120 (FEMDI).

Belongs to the eIF4E-binding protein family. As to quaternary structure, hypophosphorylated EIF4EBP2 interacts with EIF4E; phosphorylation of EIF4EBP2 by mTORC1 causes dissociation of the complex allowing EIF4G1/EIF4G3 to bind and consequent initiation of translation. Interacts (via TOS motif) with RPTOR; promoting phosphorylation by mTORC1. Interacts with PCMT1; required to prevent isoaspartate accumulation and convert isoaspartate to Asp. In terms of processing, phosphorylation at Thr-37, Thr-46, Ser-65, Thr-70 and Ser-83 is mediated by MTOR and corresponds to the hyperphosphorylated form: it abolishes binding to EIF4E by inducing folding of intrinsically disordered regions. First phosphorylated at Thr-37 and Thr-46 by MTOR, inducing folding of region encompassing residues from Pro-18 to Arg-62 of into a four-stranded beta-domain that sequesters the helical YXXXXLPhi motif into a partly buried beta-strand, blocking accessibility to EIF4E. Protein phosphorylated at Thr-37 and Thr-46 is however unstable and subsequent phosphorylation at Ser-65, Thr-70 and Ser-83 is required to stabilize the fold, decreasing affinity for EIF4E by a factor of 4000. Phosphorylated in response to insulin, EGF and PDGF. Post-translationally, deamidated at Asn-99 and Asn-102 to aspartate (Asp) in brain. Deamidation promotes interaction with RPTOR, subsequent phosphorylation by mTORC1 and increased translation, leading to impair kinetics of excitatory synaptic transmission. Deamidation takes place during postnatal development, when the PI3K-Akt-mTOR signaling is reduced, suggesting it acts as a compensatory mechanism to promote translation despite attenuated PI3K-Akt-mTOR signaling in neuron development. Deamidation converts Asn residues into a mixture of Asp and isoaspartate; interactions with PCMT1 is required to prevent isoaspartate accumulation and convert isoaspartate to Asp. Enriched in brain.

It localises to the cytoplasm. The protein localises to the nucleus. Its function is as follows. Repressor of translation initiation involved in synaptic plasticity, learning and memory formation. Regulates EIF4E activity by preventing its assembly into the eIF4F complex: hypophosphorylated form of EIF4EBP2 competes with EIF4G1/EIF4G3 and strongly binds to EIF4E, leading to repress translation. In contrast, hyperphosphorylated form dissociates from EIF4E, allowing interaction between EIF4G1/EIF4G3 and EIF4E, leading to initiation of translation. EIF4EBP2 is enriched in brain and acts as a regulator of synapse activity and neuronal stem cell renewal via its ability to repress translation initiation. Mediates the regulation of protein translation by hormones, growth factors and other stimuli that signal through the MAP kinase and mTORC1 pathways. The polypeptide is Eukaryotic translation initiation factor 4E-binding protein 2 (Mus musculus (Mouse)).